A 248-amino-acid polypeptide reads, in one-letter code: MSEKIAILSAYSFVNIEEPESLIPKLLFVGKRKYVKGTILLSKEGFNGSFSGSYESVNLVLEELKKLTNTKDVNVKINYSEIHPFQKLKVRLKKEIVAMNVDNLNVNLFKGEYIETKDWDEFITKQDVIVVDTRNDYEVEVGTFKAAINPYTETFKQFPAWAEQNAELLKGKKIAMFCTGGIRCEKSTSLLKSMGHEEVYHLKGGILQYLEDTQNKNNLWQGECFVFDDRRAVADDLAPAEGYWLERK.

The 95-residue stretch at 124–218 folds into the Rhodanese domain; it reads TKQDVIVVDT…YLEDTQNKNN (95 aa). Catalysis depends on Cys-178, which acts as the Cysteine persulfide intermediate.

The protein belongs to the TrhO family.

It catalyses the reaction uridine(34) in tRNA + AH2 + O2 = 5-hydroxyuridine(34) in tRNA + A + H2O. In terms of biological role, catalyzes oxygen-dependent 5-hydroxyuridine (ho5U) modification at position 34 in tRNAs. This is tRNA uridine(34) hydroxylase from Rickettsia bellii (strain OSU 85-389).